An 84-amino-acid chain; its full sequence is Large ribosomal subunit protein bL27 (84 aa).

Positions 1-21 (MAHKKGAGSTKNGRDSKPKML) are disordered.

It belongs to the bacterial ribosomal protein bL27 family.

The protein is Large ribosomal subunit protein bL27 of Dehalococcoides mccartyi (strain ATCC BAA-2100 / JCM 16839 / KCTC 5957 / BAV1).